A 351-amino-acid polypeptide reads, in one-letter code: MPEDRAKAYTEAGVDINAGNALVSRIKSMVASTHTKGVISDIGGFGGLFKPDLGGMEDPVLVSSTDGVGTKLKLAFMFDKHDTVGIDLVAMSVNDVLVQGAKPLFFLDYFATGKLDVEAAAQVVSGVAEGCRQAQCALLGGETAEMPDMYAPGEYDLAGFCVGIADNARIVDGSDIRVGDVIIGLGASGVHSNGYTLVRKLFEKSGLGADDIMPGTDASVRDVLMTPTRIYVETIRNLMRDFQIKGMVHVTGGGFYDNIPRVLPASVDARIAFGAWDILPVFHWLRDLGELSWPEMLQIFNCGIGYVVIVGQEEADDVLGRLAALDQPAWAIGTVERRREESEEQVYVDFG.

It belongs to the AIR synthase family.

It localises to the cytoplasm. It carries out the reaction 2-formamido-N(1)-(5-O-phospho-beta-D-ribosyl)acetamidine + ATP = 5-amino-1-(5-phospho-beta-D-ribosyl)imidazole + ADP + phosphate + H(+). The protein operates within purine metabolism; IMP biosynthesis via de novo pathway; 5-amino-1-(5-phospho-D-ribosyl)imidazole from N(2)-formyl-N(1)-(5-phospho-D-ribosyl)glycinamide: step 2/2. This Oleidesulfovibrio alaskensis (strain ATCC BAA-1058 / DSM 17464 / G20) (Desulfovibrio alaskensis) protein is Phosphoribosylformylglycinamidine cyclo-ligase.